The chain runs to 261 residues: Pantothenate synthetase (261 aa).

Residue 29–36 participates in ATP binding; that stretch reads MGALHNGH. Residue His36 is the Proton donor of the active site. Gln60 contributes to the (R)-pantoate binding site. Gln60 provides a ligand contact to beta-alanine. ATP is bound at residue 147-150; that stretch reads GEKD. Gln153 lines the (R)-pantoate pocket. 184–187 is an ATP binding site; that stretch reads LSSR.

Belongs to the pantothenate synthetase family. Homodimer.

It is found in the cytoplasm. The enzyme catalyses (R)-pantoate + beta-alanine + ATP = (R)-pantothenate + AMP + diphosphate + H(+). The protein operates within cofactor biosynthesis; (R)-pantothenate biosynthesis; (R)-pantothenate from (R)-pantoate and beta-alanine: step 1/1. In terms of biological role, catalyzes the condensation of pantoate with beta-alanine in an ATP-dependent reaction via a pantoyl-adenylate intermediate. This Francisella tularensis subsp. tularensis (strain FSC 198) protein is Pantothenate synthetase.